The following is a 144-amino-acid chain: Putative pre-16S rRNA nuclease (144 aa).

It belongs to the YqgF nuclease family.

Its subcellular location is the cytoplasm. Its function is as follows. Could be a nuclease involved in processing of the 5'-end of pre-16S rRNA. The protein is Putative pre-16S rRNA nuclease of Ralstonia nicotianae (strain ATCC BAA-1114 / GMI1000) (Ralstonia solanacearum).